The following is a 62-amino-acid chain: Large ribosomal subunit protein bL28 (62 aa).

The protein belongs to the bacterial ribosomal protein bL28 family.

This is Large ribosomal subunit protein bL28 from Syntrophomonas wolfei subsp. wolfei (strain DSM 2245B / Goettingen).